The following is a 146-amino-acid chain: uncharacterized protein (146 aa).

Acidic residues predominate over residues 86 to 96 (EFDSPMDEEEE). Residues 86-124 (EFDSPMDEEEETKPREASLDQTAPKKSKKEELLVKNNNF) form a disordered region.

This is an uncharacterized protein from Ostreid herpesvirus 1 (isolate France) (OsHV-1).